The following is a 381-amino-acid chain: Glucose-1-phosphate adenylyltransferase (381 aa).

Alpha-D-glucose 1-phosphate-binding positions include Y100, G165, 180-181 (EK), and S191.

It belongs to the bacterial/plant glucose-1-phosphate adenylyltransferase family. Homotetramer.

It carries out the reaction alpha-D-glucose 1-phosphate + ATP + H(+) = ADP-alpha-D-glucose + diphosphate. Its pathway is glycan biosynthesis; glycogen biosynthesis. Functionally, involved in the biosynthesis of ADP-glucose, a building block required for the elongation reactions to produce glycogen. Catalyzes the reaction between ATP and alpha-D-glucose 1-phosphate (G1P) to produce pyrophosphate and ADP-Glc. In Mycoplasma mobile (strain ATCC 43663 / 163K / NCTC 11711) (Mesomycoplasma mobile), this protein is Glucose-1-phosphate adenylyltransferase.